A 696-amino-acid polypeptide reads, in one-letter code: Elongation factor G (696 aa).

In terms of domain architecture, tr-type G spans 8–282 (DRTRNIGIMA…AVIDYLPSPL (275 aa)). Residues 17–24 (AHIDAGKT), 81–85 (DTPGH), and 135–138 (NKMD) contribute to the GTP site.

Belongs to the TRAFAC class translation factor GTPase superfamily. Classic translation factor GTPase family. EF-G/EF-2 subfamily.

It is found in the cytoplasm. In terms of biological role, catalyzes the GTP-dependent ribosomal translocation step during translation elongation. During this step, the ribosome changes from the pre-translocational (PRE) to the post-translocational (POST) state as the newly formed A-site-bound peptidyl-tRNA and P-site-bound deacylated tRNA move to the P and E sites, respectively. Catalyzes the coordinated movement of the two tRNA molecules, the mRNA and conformational changes in the ribosome. The protein is Elongation factor G of Staphylococcus saprophyticus subsp. saprophyticus (strain ATCC 15305 / DSM 20229 / NCIMB 8711 / NCTC 7292 / S-41).